Consider the following 250-residue polypeptide: 2,3-bisphosphoglycerate-dependent phosphoglycerate mutase (250 aa).

Substrate is bound by residues 8-15 (RHGQSAWN), 21-22 (TG), arginine 60, 87-90 (ERHY), lysine 98, 114-115 (RR), and 183-184 (GN). Histidine 9 functions as the Tele-phosphohistidine intermediate in the catalytic mechanism. Residue glutamate 87 is the Proton donor/acceptor of the active site.

This sequence belongs to the phosphoglycerate mutase family. BPG-dependent PGAM subfamily. In terms of assembly, homodimer.

It catalyses the reaction (2R)-2-phosphoglycerate = (2R)-3-phosphoglycerate. Its pathway is carbohydrate degradation; glycolysis; pyruvate from D-glyceraldehyde 3-phosphate: step 3/5. Its function is as follows. Catalyzes the interconversion of 2-phosphoglycerate and 3-phosphoglycerate. The sequence is that of 2,3-bisphosphoglycerate-dependent phosphoglycerate mutase from Nitratidesulfovibrio vulgaris (strain ATCC 29579 / DSM 644 / CCUG 34227 / NCIMB 8303 / VKM B-1760 / Hildenborough) (Desulfovibrio vulgaris).